The primary structure comprises 338 residues: 1-aminocyclopropane-1-carboxylate deaminase (338 aa).

Lys-51 carries the post-translational modification N6-(pyridoxal phosphate)lysine. Ser-78 acts as the Nucleophile in catalysis.

It belongs to the ACC deaminase/D-cysteine desulfhydrase family. Homotrimer. Pyridoxal 5'-phosphate serves as cofactor.

It carries out the reaction 1-aminocyclopropane-1-carboxylate + H2O = 2-oxobutanoate + NH4(+). Catalyzes a cyclopropane ring-opening reaction, the irreversible conversion of 1-aminocyclopropane-1-carboxylate (ACC) to ammonia and alpha-ketobutyrate. Allows growth on ACC as a nitrogen source. The polypeptide is 1-aminocyclopropane-1-carboxylate deaminase (Pseudomonas sp. (strain ACP)).